Here is a 70-residue protein sequence, read N- to C-terminus: Large ribosomal subunit protein bL31 (70 aa).

Zn(2+)-binding residues include Cys-17, Cys-19, Cys-37, and Cys-40.

This sequence belongs to the bacterial ribosomal protein bL31 family. Type A subfamily. As to quaternary structure, part of the 50S ribosomal subunit. Requires Zn(2+) as cofactor.

Binds the 23S rRNA. The chain is Large ribosomal subunit protein bL31 from Clostridium kluyveri (strain NBRC 12016).